A 706-amino-acid chain; its full sequence is Elongation factor G (706 aa).

One can recognise a tr-type G domain in the interval 15-291 (LKTRNIGISA…GVLDYLASPV (277 aa)). Residues 24 to 31 (AHIDSGKT), 91 to 95 (DTPGH), and 145 to 148 (NKLD) each bind GTP.

It belongs to the TRAFAC class translation factor GTPase superfamily. Classic translation factor GTPase family. EF-G/EF-2 subfamily.

Its subcellular location is the cytoplasm. Its function is as follows. Catalyzes the GTP-dependent ribosomal translocation step during translation elongation. During this step, the ribosome changes from the pre-translocational (PRE) to the post-translocational (POST) state as the newly formed A-site-bound peptidyl-tRNA and P-site-bound deacylated tRNA move to the P and E sites, respectively. Catalyzes the coordinated movement of the two tRNA molecules, the mRNA and conformational changes in the ribosome. In Leptospira borgpetersenii serovar Hardjo-bovis (strain JB197), this protein is Elongation factor G.